Reading from the N-terminus, the 240-residue chain is Large ribosomal subunit protein uL2 (240 aa).

Over residues 1-11 (MGKRLISQNRG) the composition is skewed to polar residues. Disordered regions lie at residues 1–26 (MGKR…KRKG) and 206–240 (GGGR…TGRK). Composition is skewed to basic residues over residues 13–26 (GTPK…KRKG) and 228–240 (KVGH…TGRK).

The protein belongs to the universal ribosomal protein uL2 family. Part of the 50S ribosomal subunit. Forms a bridge to the 30S subunit in the 70S ribosome.

One of the primary rRNA binding proteins. Required for association of the 30S and 50S subunits to form the 70S ribosome, for tRNA binding and peptide bond formation. It has been suggested to have peptidyltransferase activity; this is somewhat controversial. Makes several contacts with the 16S rRNA in the 70S ribosome. In Methanococcus vannielii (strain ATCC 35089 / DSM 1224 / JCM 13029 / OCM 148 / SB), this protein is Large ribosomal subunit protein uL2.